Reading from the N-terminus, the 324-residue chain is Protein SRC2 homolog (324 aa).

A C2 domain is found at 1–111 (MECRSLDLTI…LDQNKGDEEK (111 aa)). Residues 1 to 279 (MECRSLDLTI…KPQKPKKHGK (279 aa)) lie on the Cytoplasmic side of the membrane. Positions 141–281 (GSSSGPHAPV…QKPKKHGKAG (141 aa)) are disordered. 2 stretches are compositionally biased toward low complexity: residues 166-175 (YPPGHGAPSA) and 246-269 (PYGY…QAHG). The span at 270 to 279 (KPQKPKKHGK) shows a compositional bias: basic residues. The chain crosses the membrane as a helical; Signal-anchor span at residues 280-300 (AGAGMGLGLGLGAGLLGGLLV). At 301-324 (GEAVSDIADMGDMGDMGDMGGFDF) the chain is on the lumenal side.

As to quaternary structure, interacts with RBOHF (via N-terminus).

The protein localises to the endoplasmic reticulum membrane. Its subcellular location is the protein storage vacuole membrane. It is found in the cell membrane. In terms of biological role, may act as an activator of the calcium-dependent activation of RBOHF that mediates reactive oxygen species (ROS) production and may play a role in cold responses. In Arabidopsis thaliana (Mouse-ear cress), this protein is Protein SRC2 homolog.